The chain runs to 131 residues: Methylglyoxal synthase (131 aa).

One can recognise an MGS-like domain in the interval 1-131 (MKIALIAHDK…GDLDYRKLRK (131 aa)). Substrate-binding positions include histidine 8, lysine 12, 34 to 37 (TGTT), and 54 to 55 (SG). Aspartate 60 functions as the Proton donor/acceptor in the catalytic mechanism. Residue histidine 87 coordinates substrate.

This sequence belongs to the methylglyoxal synthase family.

The catalysed reaction is dihydroxyacetone phosphate = methylglyoxal + phosphate. Functionally, catalyzes the formation of methylglyoxal from dihydroxyacetone phosphate. The sequence is that of Methylglyoxal synthase from Bacillus cereus (strain ATCC 10987 / NRS 248).